We begin with the raw amino-acid sequence, 688 residues long: Elongation factor G (688 aa).

In terms of domain architecture, tr-type G spans 8-282 (EKTRNIGIMA…AIIDYLPSPM (275 aa)). GTP is bound by residues 17–24 (AHIDAGKT), 81–85 (DTPGH), and 135–138 (NKMD).

Belongs to the TRAFAC class translation factor GTPase superfamily. Classic translation factor GTPase family. EF-G/EF-2 subfamily.

The protein localises to the cytoplasm. Its function is as follows. Catalyzes the GTP-dependent ribosomal translocation step during translation elongation. During this step, the ribosome changes from the pre-translocational (PRE) to the post-translocational (POST) state as the newly formed A-site-bound peptidyl-tRNA and P-site-bound deacylated tRNA move to the P and E sites, respectively. Catalyzes the coordinated movement of the two tRNA molecules, the mRNA and conformational changes in the ribosome. The polypeptide is Elongation factor G (Phytoplasma mali (strain AT)).